Reading from the N-terminus, the 151-residue chain is Large ribosomal subunit protein uL13 (151 aa).

It belongs to the universal ribosomal protein uL13 family. As to quaternary structure, part of the 50S ribosomal subunit.

In terms of biological role, this protein is one of the early assembly proteins of the 50S ribosomal subunit, although it is not seen to bind rRNA by itself. It is important during the early stages of 50S assembly. The sequence is that of Large ribosomal subunit protein uL13 from Microcystis aeruginosa (strain NIES-843 / IAM M-2473).